The primary structure comprises 109 residues: Spermidine export protein MdtI (109 aa).

4 helical membrane passes run 6-26 (FYHI…NILL), 35-55 (VWLG…LAQA), 64-84 (AYAL…WILF), and 88-108 (LNYK…MIKL).

It belongs to the drug/metabolite transporter (DMT) superfamily. Small multidrug resistance (SMR) (TC 2.A.7.1) family. MdtI subfamily. As to quaternary structure, forms a complex with MdtJ.

It localises to the cell inner membrane. In terms of biological role, catalyzes the excretion of spermidine. The sequence is that of Spermidine export protein MdtI from Yersinia enterocolitica serotype O:8 / biotype 1B (strain NCTC 13174 / 8081).